A 360-amino-acid polypeptide reads, in one-letter code: Membrane-bound lytic murein transglycosylase C (360 aa).

Positions 1 to 16 are cleaved as a signal peptide; that stretch reads MKKYLALALIAPLLVS. Cysteine 17 carries the N-palmitoyl cysteine lipid modification. A lipid anchor (S-diacylglycerol cysteine) is attached at cysteine 17.

It belongs to the transglycosylase Slt family.

The protein resides in the cell outer membrane. It catalyses the reaction Exolytic cleavage of the (1-&gt;4)-beta-glycosidic linkage between N-acetylmuramic acid (MurNAc) and N-acetylglucosamine (GlcNAc) residues in peptidoglycan, from either the reducing or the non-reducing ends of the peptidoglycan chains, with concomitant formation of a 1,6-anhydrobond in the MurNAc residue.. Functionally, murein-degrading enzyme. May play a role in recycling of muropeptides during cell elongation and/or cell division. In Klebsiella pneumoniae subsp. pneumoniae (strain ATCC 700721 / MGH 78578), this protein is Membrane-bound lytic murein transglycosylase C.